A 427-amino-acid polypeptide reads, in one-letter code: Carboxyl-terminal-processing protease (427 aa).

The first 31 residues, 1–31 (MGKRTRRFWALAFSLLMGALIYLGNTPSALA), serve as a signal peptide directing secretion. Residues 104-186 (NLQVTTTGEL…TKVSLEILSA (83 aa)) form the PDZ domain. Catalysis depends on charge relay system residues Ser313, Asp324, and Lys338.

The protein belongs to the peptidase S41A family.

It is found in the cellular thylakoid lumen. It carries out the reaction The enzyme shows specific recognition of a C-terminal tripeptide, Xaa-Yaa-Zaa, in which Xaa is preferably Ala or Leu, Yaa is preferably Ala or Tyr, and Zaa is preferably Ala, but then cleaves at a variable distance from the C-terminus. A typical cleavage is -Ala-Ala-|-Arg-Ala-Ala-Lys-Glu-Asn-Tyr-Ala-Leu-Ala-Ala.. Cleavage of the 16 C-terminal residues from the D1 precursor of photosystem II (PSII). This proteolytic processing is necessary to allow the light-driven assembly of the oxygen-evolving cluster (a tetranuclear manganese), which is responsible for photosynthetic water oxidation. The protein is Carboxyl-terminal-processing protease (ctpA) of Synechocystis sp. (strain ATCC 27184 / PCC 6803 / Kazusa).